The sequence spans 211 residues: Probable transcription repressor protein RGM1 (211 aa).

Residues 6–11 (PKRNKD) carry the Nuclear localization signal motif. 2 C2H2-type zinc fingers span residues 19–44 (YRCV…IRKH) and 50–73 (FQCN…SSVH). Positions 178–211 (NIVELPPDSSDTPASPSKVQSFDQAKDASPNAKK) are disordered. A compositionally biased stretch (low complexity) spans 183–194 (PPDSSDTPASPS).

It is found in the nucleus. In Saccharomyces cerevisiae (strain ATCC 204508 / S288c) (Baker's yeast), this protein is Probable transcription repressor protein RGM1 (RGM1).